The sequence spans 618 residues: Glucose starvation modulator protein 1 (618 aa).

The zn(2)-C6 fungal-type DNA-binding region spans C20 to C48. Positions A325–E352 are disordered. Over residues A335–E352 the composition is skewed to basic and acidic residues. The 73-residue stretch at L466–G538 folds into the PAS domain.

This sequence belongs to the ERT1/acuK family.

Its subcellular location is the nucleus. Its function is as follows. Transcription factor which regulates nonfermentable carbon utilization. Binds specifically to 5'-CGGN(8)CGG-3' and 5'-CGGN(9)CGG-3' sequences in the promoter region. The sequence is that of Glucose starvation modulator protein 1 (GSM1) from Saccharomyces cerevisiae (strain YJM789) (Baker's yeast).